A 227-amino-acid polypeptide reads, in one-letter code: Octanoyltransferase (227 aa).

A BPL/LPL catalytic domain is found at 34 to 212; the sequence is RQREDGLMLL…AFAEVFPVTW (179 aa). Substrate contacts are provided by residues 76–83, 143–145, and 156–158; these read RGGEVTYH, AIA, and GFA. Cys174 (acyl-thioester intermediate) is an active-site residue.

Belongs to the LipB family.

It localises to the cytoplasm. The catalysed reaction is octanoyl-[ACP] + L-lysyl-[protein] = N(6)-octanoyl-L-lysyl-[protein] + holo-[ACP] + H(+). The protein operates within protein modification; protein lipoylation via endogenous pathway; protein N(6)-(lipoyl)lysine from octanoyl-[acyl-carrier-protein]: step 1/2. Catalyzes the transfer of endogenously produced octanoic acid from octanoyl-acyl-carrier-protein onto the lipoyl domains of lipoate-dependent enzymes. Lipoyl-ACP can also act as a substrate although octanoyl-ACP is likely to be the physiological substrate. The polypeptide is Octanoyltransferase (Synechocystis sp. (strain ATCC 27184 / PCC 6803 / Kazusa)).